Consider the following 483-residue polypeptide: MGQFISFMQEIPIFLQEALNIALVAVSLICIVKGLVNLYRCGLFQLMVFLVLAGRSCSEETFKIGMHTQFQEVSLSLSALLTNQSHELPMLCLANKTHLYLKSGRSSFKINIDSVTVLTRSADVFVHSPKLGSCFESDEEWVVAWWIEAIGHRWDQDPGLLCRNKTKTEGKLIQINISRADGNVHYGWRLKNGLDHIYRGREEPCFEGEQCLIKIQPEDWPTDCKADHTNTFRFLSRSQKSIAVGRTLKAFFSWSLTDPLGNEAPGGYCLEKWMLVASELKCFGNTAIAKCNQNHDSEFCDMLRLFDYNKNAIKTLNEETKTRVNVLSHTINALISDNLLMKNKIRELMSVPYCNYTRFWYVNHTLSGQHSLPRCWMIRNNSYLNSSEFRNEWILESDFLISEMLSKEYSERQGRTPITLVDICFWSTVFFTSTLFLHLIGFPTHEHIRGEGCPLPHRLNSMGGCRCGKYLPLKKPTIWHRRH.

Residue glycine 2 is the site of N-myristoyl glycine; by host attachment. Residues 2-17 (GQFISFMQEIPIFLQE) lie on the Extracellular side of the membrane. The chain crosses the membrane as a helical span at residues 18-32 (ALNIALVAVSLICIV). A topological domain (cytoplasmic) is located at residue lysine 33. A helical membrane pass occupies residues 34-53 (GLVNLYRCGLFQLMVFLVLA). 2 consecutive stretches face the extracellular side: residues 54–58 (GRSCS) and 59–422 (EETF…TLVD). Cysteine 57 contributes to the Zn(2+) binding site. N-linked (GlcNAc...) asparagine; by host glycans are attached at residues asparagine 83 and asparagine 95. 6 cysteine pairs are disulfide-bonded: cysteine 92/cysteine 224, cysteine 134/cysteine 162, cysteine 205/cysteine 211, cysteine 269/cysteine 282, cysteine 291/cysteine 300, and cysteine 354/cysteine 375. N-linked (GlcNAc...) asparagine; by host glycans are attached at residues asparagine 164 and asparagine 176. N-linked (GlcNAc...) asparagine; by host glycosylation is found at asparagine 355, asparagine 363, asparagine 380, and asparagine 385. Residues 423 to 443 (ICFWSTVFFTSTLFLHLIGFP) traverse the membrane as a helical segment. Residues 444–483 (THEHIRGEGCPLPHRLNSMGGCRCGKYLPLKKPTIWHRRH) lie on the Cytoplasmic side of the membrane. Positions 445, 447, 453, 457, 465, 467, and 483 each coordinate Zn(2+).

Belongs to the arenaviridae GPC protein family. In terms of assembly, homotetramer; disulfide-linked. As to quaternary structure, homotetramer. GP2 homotetramers bind through ionic interactions with GP1 homotetramers to form the GP complex together with the stable signal peptide. The GP-C polyprotein interacts with the host protease MBTPS1/SKI-1 resulting in the polyprotein processing. In terms of processing, specific enzymatic cleavages in vivo yield mature proteins. GP-C polyprotein is cleaved in the endoplasmic reticulum by the host protease MBTPS1. Only cleaved glycoprotein is incorporated into virions. The SSP remains stably associated with the GP complex following cleavage by signal peptidase and plays crucial roles in the trafficking of GP through the secretory pathway. Post-translationally, myristoylation is necessary for GP2-mediated fusion activity.

It localises to the virion membrane. The protein localises to the host endoplasmic reticulum membrane. It is found in the host Golgi apparatus membrane. Its subcellular location is the host cell membrane. In terms of biological role, class I viral fusion protein that directs fusion of viral and host endosomal membranes, leading to delivery of the nucleocapsid into the cytoplasm. Membrane fusion is mediated by irreversible conformational changes induced upon acidification in the endosome. Its function is as follows. Stable signal peptide (SSP): cleaved and functions as a signal peptide. In addition, it is also retained as the third component of the GP complex. The SSP is required for efficient glycoprotein expression, post-translational maturation cleavage of GP1 and GP2, glycoprotein transport to the cell surface plasma membrane, formation of infectious virus particles, and acid pH-dependent glycoprotein-mediated cell fusion. Interacts with the host receptor. The polypeptide is Pre-glycoprotein polyprotein GP complex (Artibeus (neotropical fruit bats)).